A 445-amino-acid polypeptide reads, in one-letter code: Aminopeptidase S (445 aa).

Positions 1 to 45 are cleaved as a signal peptide; sequence MRPNRFSLRRSPTAVAAVALAAVLAAGAPAAQAAGAAAPTAAAAA. The Ca(2+) site is built by D48 and I49. Zn(2+) is bound by residues H130 and D142. The active-site Proton acceptor is E176. The Zn(2+) site is built by E177, D205, and H292. C290 and C295 are oxidised to a cystine. Ca(2+) contacts are provided by D307 and D311. The P/Homo B domain occupies 325–445; sequence GEPPTGEGVF…GYIDSWKLTF (121 aa). Residues 330-445 constitute a propeptide, removed in mature form; that stretch reads GEGVFSNTTD…GYIDSWKLTF (116 aa).

Belongs to the peptidase M28 family. M28A subfamily. Monomer. Ca(2+) serves as cofactor. It depends on Zn(2+) as a cofactor. Mn(2+) is required as a cofactor. Requires Co(2+) as cofactor.

It is found in the secreted. The enzyme catalyses Release of an N-terminal amino acid with a preference for large hydrophobic amino-terminus residues.. Its activity is regulated as follows. Calcium activates the enzyme, inhibited by 1,10-phenanthroline, EDTA and EGTA. End-product inhibited by L-amino acids. Non-competitively inhibited by NaF and NaH(2)PO(4). An exopeptidase specific for larger hydrophobic amino acids (especially leucine), no cleavage occurs if the next residue is proline. This chain is Aminopeptidase S, found in Streptomyces griseus subsp. griseus (strain JCM 4626 / CBS 651.72 / NBRC 13350 / KCC S-0626 / ISP 5235).